A 398-amino-acid chain; its full sequence is Substance-K receptor (398 aa).

At 1-32 (MGTCDIVTEANISSGPESNTTGITAFSMPSWQ) the chain is on the extracellular side. 2 N-linked (GlcNAc...) asparagine glycosylation sites follow: Asn11 and Asn19. A helical membrane pass occupies residues 33–56 (LALWATAYLALVLVAVTGNAIVIW). At 57–69 (IILAHRRMRTVTN) the chain is on the cytoplasmic side. The helical transmembrane segment at 70 to 90 (YFIVNLALADLCMAAFNAAFN) threads the bilayer. Topologically, residues 91–107 (FVYASHNIWYFGRAFCY) are extracellular. Cys106 and Cys181 form a disulfide bridge. A helical membrane pass occupies residues 108–129 (FQNLFPITAMFVSIYSMTAIAA). Residues 130–149 (DRYMAIVHPFQPRLSAPSTK) lie on the Cytoplasmic side of the membrane. A helical transmembrane segment spans residues 150–170 (AVIAGIWLVALALASPQCFYS). Topologically, residues 171-196 (TVTMDQGATKCVVAWPEDSGGKTLLL) are extracellular. A helical membrane pass occupies residues 197-218 (YHLVVIALIYFLPLAVMFVAYS). The Cytoplasmic segment spans residues 219–251 (VIGLTLWRRAVPGHQAHGANLRHLQAMKKFVKT). Residues 252-272 (MVLVVLTFAICWLPYHLYFIL) form a helical membrane-spanning segment. Residues 273-290 (GSFQEDIYCHKFIQQVYL) lie on the Extracellular side of the membrane. A helical transmembrane segment spans residues 291–310 (ALFWLAMSSTMYNPIIYCCL). Topologically, residues 311–398 (NHRFRSGFRL…LAPTKTHVEI (88 aa)) are cytoplasmic. Residue Cys324 is the site of S-palmitoyl cysteine attachment.

The protein belongs to the G-protein coupled receptor 1 family.

Its subcellular location is the cell membrane. This is a receptor for the tachykinin neuropeptide substance K (neurokinin A). It is associated with G proteins that activate a phosphatidylinositol-calcium second messenger system. The rank order of affinity of this receptor to tachykinins is: substance K &gt; neuromedin-K &gt; substance P. This chain is Substance-K receptor (TACR2), found in Homo sapiens (Human).